Consider the following 279-residue polypeptide: MIKLLVSFTILFVLSSARPQEIDSNQAAIANTEANEAPVIVNNDASMGNAVDFSFPTNVQVMNCLKKAKYQVVFLRGFVPTGNGAFDSNCVGNIRNAYSAGLGIETYMTPQPISSWQGYQQLDLLYNGLNNNGITIRSVWIQVTSPANWPNNPTANVNFINSIISRAQQYGLSVGIYTNQYDWSQITGNSANINSNVMLWYWNVLGGGTSGETKPTFADFRAFGPFKKASVKQYAQVETVCNLVVNRDVYAVGIPAAAPKTEVNMADGEKIVVGGFVGN.

The N-terminal stretch at 1 to 19 (MIKLLVSFTILFVLSSARP) is a signal peptide. Residues 47–265 (MGNAVDFSFP…AAAPKTEVNM (219 aa)) form the Ch-type lysozyme domain.

This sequence belongs to the glycosyl hydrolase 25 family. As to expression, expressed in intestine.

Involved in resistance to Gram-positive bacteria P.aeruginosa or B.thuringiensis infection. The sequence is that of Lysozyme-like protein 2 from Caenorhabditis elegans.